The primary structure comprises 91 residues: Putative septation protein SpoVG (91 aa).

This sequence belongs to the SpoVG family.

Functionally, could be involved in septation. This chain is Putative septation protein SpoVG, found in Caldanaerobacter subterraneus subsp. tengcongensis (strain DSM 15242 / JCM 11007 / NBRC 100824 / MB4) (Thermoanaerobacter tengcongensis).